The chain runs to 506 residues: ESX-5 secretion system ATPase EccB5 (506 aa).

Residues V56–I76 traverse the membrane as a helical segment.

It belongs to the EccB family. Part of the ESX-5 / type VII secretion system (T7SS), which is composed of cytosolic and membrane components. The ESX-5 membrane complex is composed of EccB5, EccC5, EccD5 and EccE5.

It localises to the cell inner membrane. Its function is as follows. An ATPase. Part of the ESX-5 specialized secretion system, which is responsible for the secretion of EsxN and a number of PE_PGRS and PPE proteins, including PPE41. This chain is ESX-5 secretion system ATPase EccB5, found in Mycobacterium tuberculosis (strain CDC 1551 / Oshkosh).